The primary structure comprises 42 residues: Cytochrome b559 subunit beta (42 aa).

A helical transmembrane segment spans residues 17–33 (WLSIHALAVPTVFFLGA). Residue histidine 21 coordinates heme.

It belongs to the PsbE/PsbF family. As to quaternary structure, heterodimer of an alpha subunit and a beta subunit. PSII is composed of 1 copy each of membrane proteins PsbA, PsbB, PsbC, PsbD, PsbE, PsbF, PsbH, PsbI, PsbJ, PsbK, PsbL, PsbM, PsbT, PsbX, PsbY, PsbZ, Psb30/Ycf12, at least 3 peripheral proteins of the oxygen-evolving complex and a large number of cofactors. It forms dimeric complexes. The cofactor is heme b.

The protein resides in the plastid. Its subcellular location is the chloroplast thylakoid membrane. Its function is as follows. This b-type cytochrome is tightly associated with the reaction center of photosystem II (PSII). PSII is a light-driven water:plastoquinone oxidoreductase that uses light energy to abstract electrons from H(2)O, generating O(2) and a proton gradient subsequently used for ATP formation. It consists of a core antenna complex that captures photons, and an electron transfer chain that converts photonic excitation into a charge separation. The protein is Cytochrome b559 subunit beta of Tupiella akineta (Green alga).